A 174-amino-acid polypeptide reads, in one-letter code: Inactive protein RESTRICTED TEV MOVEMENT 1 (174 aa).

Residues Met-1 to Pro-152 form the Jacalin-type lectin domain.

Belongs to the jacalin lectin family. Self-interacts. Interacts with RTM3.

The protein resides in the cytoplasm. In terms of biological role, unable to mediate restriction of long-distance movement of the pathogenic tobacco etch virus (TEV) without causing a hypersensitive response or inducing systemic acquired resistance. This Arabidopsis thaliana (Mouse-ear cress) protein is Inactive protein RESTRICTED TEV MOVEMENT 1 (RTM1).